The following is a 65-amino-acid chain: Weak toxin CM-13b (65 aa).

5 disulfides stabilise this stretch: Cys3/Cys24, Cys6/Cys11, Cys17/Cys42, Cys46/Cys57, and Cys58/Cys63.

It belongs to the three-finger toxin family. Ancestral subfamily. Orphan group II sub-subfamily. In terms of tissue distribution, expressed by the venom gland.

The protein localises to the secreted. Functionally, binds with low affinity to muscular (alpha-1-beta-1-delta-epsilon/CHRNA1-CHRNB1-CHRND-CHRNE) and very low affinity to neuronal (alpha-7/CHRNA7) nicotinic acetylcholine receptor (nAChR). The polypeptide is Weak toxin CM-13b (Naja annulifera (Banded Egyptian cobra)).